The following is a 318-amino-acid chain: MASKTYTLNTGAKIPAVGFGTFANEGAKGETYAAVTKALDVGYRHLDCAWFYHNEDEVGDAVRDFLARRPDVKREDLFICTKVWNHLHEPEDVKWSAKNSCENLKVDYIDLFLVHWPIAAEKNSDRSVKLGPDGKYVINQALTENPEPTWRAMEELVESGLVKAIGVSNWTIPGLKKLLQIAKIKPAVNQIEIHPFLPNEELVAFCFENGILPEAYSPLGSQNQVPSTGERVRDNPTLKAVAERSGYSLAQILLAWGLKRGYVVLPKSSTPSRIESNFNIPELSDEDFEAIQQVAKGRHTRFVNMKDTFGYNVWPEEE.

The active-site Proton donor is the Y52. Residue H115 participates in substrate binding. Residue S217–N277 coordinates NADP(+).

This sequence belongs to the aldo/keto reductase family.

It carries out the reaction glycerol + NADP(+) = dihydroxyacetone + NADPH + H(+). Functionally, glycerol oxidoreductase probably involved in glycerol synthesis. The chain is Glycerol 2-dehydrogenase (NADP(+)) (gld2) from Hypocrea jecorina (Trichoderma reesei).